The chain runs to 392 residues: Formate-dependent phosphoribosylglycinamide formyltransferase (392 aa).

N(1)-(5-phospho-beta-D-ribosyl)glycinamide is bound by residues 22–23 (EL) and E82. ATP-binding positions include R114, K155, 160–165 (SSGKGQ), 195–198 (EGVV), and E203. In terms of domain architecture, ATP-grasp spans 119 to 308 (RLAAEELGLP…EFALHVRAFL (190 aa)). Positions 267 and 279 each coordinate Mg(2+). N(1)-(5-phospho-beta-D-ribosyl)glycinamide contacts are provided by residues D286, K355, and 362–363 (RR).

It belongs to the PurK/PurT family. In terms of assembly, homodimer.

It catalyses the reaction N(1)-(5-phospho-beta-D-ribosyl)glycinamide + formate + ATP = N(2)-formyl-N(1)-(5-phospho-beta-D-ribosyl)glycinamide + ADP + phosphate + H(+). It participates in purine metabolism; IMP biosynthesis via de novo pathway; N(2)-formyl-N(1)-(5-phospho-D-ribosyl)glycinamide from N(1)-(5-phospho-D-ribosyl)glycinamide (formate route): step 1/1. Functionally, involved in the de novo purine biosynthesis. Catalyzes the transfer of formate to 5-phospho-ribosyl-glycinamide (GAR), producing 5-phospho-ribosyl-N-formylglycinamide (FGAR). Formate is provided by PurU via hydrolysis of 10-formyl-tetrahydrofolate. This chain is Formate-dependent phosphoribosylglycinamide formyltransferase, found in Salmonella choleraesuis (strain SC-B67).